The chain runs to 364 residues: Probable dual-specificity RNA methyltransferase RlmN (364 aa).

The Proton acceptor role is filled by glutamate 109. In terms of domain architecture, Radical SAM core spans 123 to 351 (PKARLTVCVS…VSVRYSRGLE (229 aa)). Cysteine 130 and cysteine 356 are oxidised to a cystine. Residues cysteine 137, cysteine 141, and cysteine 144 each coordinate [4Fe-4S] cluster. Residues 184–185 (GE), serine 214, 237–239 (SLH), and asparagine 313 contribute to the S-adenosyl-L-methionine site. The active-site S-methylcysteine intermediate is cysteine 356.

Belongs to the radical SAM superfamily. RlmN family. [4Fe-4S] cluster serves as cofactor.

It is found in the cytoplasm. It carries out the reaction adenosine(2503) in 23S rRNA + 2 reduced [2Fe-2S]-[ferredoxin] + 2 S-adenosyl-L-methionine = 2-methyladenosine(2503) in 23S rRNA + 5'-deoxyadenosine + L-methionine + 2 oxidized [2Fe-2S]-[ferredoxin] + S-adenosyl-L-homocysteine. The catalysed reaction is adenosine(37) in tRNA + 2 reduced [2Fe-2S]-[ferredoxin] + 2 S-adenosyl-L-methionine = 2-methyladenosine(37) in tRNA + 5'-deoxyadenosine + L-methionine + 2 oxidized [2Fe-2S]-[ferredoxin] + S-adenosyl-L-homocysteine. Its function is as follows. Specifically methylates position 2 of adenine 2503 in 23S rRNA and position 2 of adenine 37 in tRNAs. The chain is Probable dual-specificity RNA methyltransferase RlmN from Nostoc punctiforme (strain ATCC 29133 / PCC 73102).